Consider the following 347-residue polypeptide: Heat-inducible transcription repressor HrcA (347 aa).

This sequence belongs to the HrcA family.

Negative regulator of class I heat shock genes (grpE-dnaK-dnaJ and groELS operons). Prevents heat-shock induction of these operons. This chain is Heat-inducible transcription repressor HrcA, found in Lactiplantibacillus plantarum (strain ATCC BAA-793 / NCIMB 8826 / WCFS1) (Lactobacillus plantarum).